The primary structure comprises 330 residues: MKKSFIDQQKEISFVKNTFTQYLIDKLDVVEVQGPILSKVGDGMQDNLNGIENPVTVNVLQIPDATYEVVHSLAKWKRHTLARFGFNEGEGLVVNMKALRPDEDSLDATHSVYVDQWDWEKVIPDGHRNIAYLKETVETIYKVIRLTELAVEARYDIEAVLPKKITFIHSEELVEKYPDLTPKERENAITKEYGAVFLIGIGGVLPDGKPHDGRAPDYDDWTTESEKGYHGLNGDILVWNEQLGHAFELSSMGIRVDEDALKRQVEITGDQDRLKLDWHQALLHGQFPLTIGGGIGQSRMAMFLLRKKHIGEVQTSVWPDAVRETYENIL.

It belongs to the class-II aminoacyl-tRNA synthetase family. AsnA subfamily.

It is found in the cytoplasm. The enzyme catalyses L-aspartate + NH4(+) + ATP = L-asparagine + AMP + diphosphate + H(+). It participates in amino-acid biosynthesis; L-asparagine biosynthesis; L-asparagine from L-aspartate (ammonia route): step 1/1. The protein is Aspartate--ammonia ligase of Streptococcus thermophilus (strain CNRZ 1066).